The chain runs to 217 residues: Eukaryotic translation initiation factor 4E (217 aa).

The segment covering 1–11 (MATVEPETTPT) has biased composition (low complexity). The segment at 1-27 (MATVEPETTPTTNPPPAEEEKTESNQE) is disordered. A2 carries the N-acetylalanine modification. T22 carries the post-translational modification Phosphothreonine. The segment at 37-40 (HPLQ) is EIF4EBP1/2/3 binding. Residue 56 to 57 (WQ) coordinates mRNA. The tract at residues 73-77 (WALYN) is EIF4EBP1/2/3 binding. 102–103 (WE) contacts mRNA. The tract at residues 132-139 (ETLLCLIG) is EIF4EBP1/2/3 binding. MRNA-binding positions include 157-162 (RAKGDK) and 205-207 (TKS). S209 carries the phosphoserine; by PKC and MKNK2 modification.

This sequence belongs to the eukaryotic initiation factor 4E family. As to quaternary structure, eIF4F is a multi-subunit complex, the composition of which varies with external and internal environmental conditions. It is composed of at least EIF4A, EIF4E and EIF4G1/EIF4G3. EIF4E is also known to interact with other partners. Interacts with EIF4ENIF1/4E-T; promotes recruitment to P-bodies and import into the nucleus. Hypophosphorylated EIF4EBP1, EIF4EBP2 and EIF4EBP3 compete with EIF4G1/EIF4G3 to interact with EIF4E; insulin stimulated MAP-kinase (MAPK1 and MAPK3) phosphorylation of EIF4EBP1 causes dissociation of the complex allowing EIF4G1/EIF4G3 to bind and consequent initiation of translation. Interacts mutually exclusive with EIF4A1 or EIF4A2. Interacts with NGDN and PIWIL2. Component of the CYFIP1-EIF4E-FMR1 complex composed of CYFIP, EIF4E and FMR1. Interacts directly with CYFIP1. Interacts with CLOCK. Binds to MKNK2 in nucleus. Interacts with LIMD1, WTIP and AJUBA. Interacts with APOBEC3G in an RNA-dependent manner. Interacts with LARP1. Interacts with METTL3. Interacts with RBM24; this interaction prevents EIF4E from binding to p53/TP53 mRNA and inhibits the assembly of translation initiation complex. Interacts with DDX3X; interaction is direct and in an RNA-independent manner; this interaction enhances EIF4E cap-binding ability and is required for the repression of cap-dependent translation and the increase of IRES-mediated translation. DDX3X competes with EIF4G1 for interaction with EIF4E. Interacts with EIF4G1; which in a mutual exclusive interaction associates either with EIF1 or with EIF4E on a common binding site. Interacts with BTG4 and CNOT7. Interacts with LRPPRC (via N-terminus); the interaction promotes association of EIF4E with 4ESE-containing mRNAs. Interacts with mRNA cleavage enzyme CPSF3 and its cofactor CPSF1. Interacts (via RING-type zinc finger) with PML; the interaction results in conformational changes of both interacting proteins and reduces EIF4E affinity for the 5' m7G cap of mRNA, thus reducing EIF4E-mediated mRNA nuclear export. Interacts with homeobox protein HHEX/PRH; the interaction inhibits EIF4E-mediated mRNA nuclear export. Interacts with homeobox protein HOXA9; the interaction positively regulates EIF4E-mediated mRNA nuclear export. Interacts with homeobox protein EMX2. In terms of assembly, (Microbial infection) Interacts with murine norovirus viral genome-linked protein; this interaction plays a role in translation of viral proteins. Phosphorylation increases the ability of the protein to bind to mRNA caps and to form the eIF4F complex. Phosphorylation also enhances its mRNA transport function. Phosphorylation at Ser-209 is not essential for protein synthesis.

It is found in the cytoplasm. It localises to the P-body. The protein resides in the stress granule. The protein localises to the nucleus. Its subcellular location is the nucleus speckle. It is found in the nuclear body. Acts in the cytoplasm to initiate and regulate protein synthesis and is required in the nucleus for export of a subset of mRNAs from the nucleus to the cytoplasm which promotes processes such as RNA capping, processing and splicing. Component of the protein complex eIF4F, which is involved in the recognition of the mRNA cap, ATP-dependent unwinding of 5'-terminal secondary structure and recruitment of mRNA to the ribosome. This protein recognizes and binds the 7-methylguanosine (m7G)-containing mRNA cap during an early step in the initiation of protein synthesis and facilitates ribosome binding by inducing the unwinding of the mRNAs secondary structures. Together with EIF4G1, antagonizes the scanning promoted by EIF1-EIF4G1 and is required for TISU translation, a process where the TISU element recognition makes scanning unnecessary. In addition to its role in translation initiation, also acts as a regulator of translation and stability in the cytoplasm. Component of the CYFIP1-EIF4E-FMR1 complex which binds to the mRNA cap and mediates translational repression: in the complex, EIF4E mediates the binding to the mRNA cap. Component of a multiprotein complex that sequesters and represses translation of proneurogenic factors during neurogenesis. In P-bodies, component of a complex that mediates the storage of translationally inactive mRNAs in the cytoplasm and prevents their degradation. May play an important role in spermatogenesis through translational regulation of stage-specific mRNAs during germ cell development. As well as its roles in translation, also involved in mRNA nucleocytoplasmic transport. Its role in mRNA export from the nucleus to the cytoplasm relies on its ability to bind the m7G cap of RNAs and on the presence of the 50-nucleotide EIF4E sensitivity element (4ESE) in the 3'UTR of sensitive transcripts. Interaction with the 4ESE is mediated by LRPPRC which binds simultaneously to both EIF4E and the 4ESE, thereby acting as a platform for assembly for the RNA export complex. EIF4E-dependent mRNA export is independent of ongoing protein or RNA synthesis and is also NFX1-independent but is XPO1-dependent with LRPPRC interacting with XPO1 to form an EIF4E-dependent mRNA export complex. Alters the composition of the cytoplasmic face of the nuclear pore to promote RNA export by reducing RANBP2 expression, relocalizing nucleoporin NUP214 and increasing expression of RANBP1 and RNA export factors DDX19 and GLE1. Promotes the nuclear export of cyclin CCND1 mRNA. Promotes the nuclear export of NOS2/iNOS mRNA. Promotes the nuclear export of MDM2 mRNA. Also promotes the export of additional mRNAs, including others involved in the cell cycle. In the nucleus, binds to capped splice factor-encoding mRNAs and stimulates their nuclear export to enhance splice factor production by increasing their cytoplasmic availability to the translation machinery. May also regulate splicing through interaction with the spliceosome in an RNA and m7G cap-dependent manner. Also binds to some pre-mRNAs and may play a role in their recruitment to the spliceosome. Promotes steady-state capping of a subset of coding and non-coding RNAs by mediating nuclear export of capping machinery mRNAs including RNMT, RNGTT and RAMAC to enhance their translation. Stimulates mRNA 3'-end processing by promoting the expression of several core cleavage complex factors required for mRNA cleavage and polyadenylation, and may also have a direct effect through its interaction with the CPSF3 cleavage enzyme. Rescues cells from apoptosis by promoting activation of serine/threonine-protein kinase AKT1 through mRNA export of NBS1 which potentiates AKT1 phosphorylation and also through mRNA export of AKT1 effectors, allowing for increased production of these proteins. This chain is Eukaryotic translation initiation factor 4E, found in Mus musculus (Mouse).